The sequence spans 448 residues: D-inositol 3-phosphate glycosyltransferase (448 aa).

1D-myo-inositol 3-phosphate is bound by residues His-35, 46–51, Lys-104, Tyr-137, Thr-161, and Arg-181; that span reads DAGGLN. Position 49 (Gly-49) interacts with UDP-N-acetyl-alpha-D-glucosamine. UDP-N-acetyl-alpha-D-glucosamine-binding residues include Arg-255, Lys-260, and Met-321. Residues Tyr-330, Arg-331, and Ala-333 each contribute to the Mg(2+) site. 2 residues coordinate UDP-N-acetyl-alpha-D-glucosamine: Glu-343 and Glu-351. Position 357 (Thr-357) interacts with Mg(2+).

Belongs to the glycosyltransferase group 1 family. MshA subfamily. Homodimer.

It catalyses the reaction 1D-myo-inositol 3-phosphate + UDP-N-acetyl-alpha-D-glucosamine = 1D-myo-inositol 2-acetamido-2-deoxy-alpha-D-glucopyranoside 3-phosphate + UDP + H(+). Catalyzes the transfer of a N-acetyl-glucosamine moiety to 1D-myo-inositol 3-phosphate to produce 1D-myo-inositol 2-acetamido-2-deoxy-glucopyranoside 3-phosphate in the mycothiol biosynthesis pathway. The polypeptide is D-inositol 3-phosphate glycosyltransferase (Acidothermus cellulolyticus (strain ATCC 43068 / DSM 8971 / 11B)).